The sequence spans 408 residues: Multidrug resistance protein MdtG (408 aa).

11 helical membrane passes run 16 to 36 (LIVAWLGCFLTGAAFSLVMPF), 58 to 78 (IVFSITFLFSAIASPFWGGLA), 92 to 112 (LGMGIVMVLMGLAQNIWQFLI), 115 to 135 (ALLGLLGGFVPNANALIATQV), 146 to 166 (TLSTGGVSGALLGPMAGGLLA), 173 to 193 (PVFFITASVLILCFFVTLFCI), 224 to 244 (LFVTTLIIQVATGSIAPILTL), 256 to 276 (VAFISGMIASVPGVAALLSAP), 290 to 310 (ILITALIFSVLLLIPMSYVQT), 319 to 339 (FLLGAADGALLPAVQTLLVYN), and 378 to 398 (AVFLVTAGVVLFNAVYSWNSL).

The protein belongs to the major facilitator superfamily. DHA1 family. MdtG (TC 2.A.1.2.20) subfamily.

It localises to the cell inner membrane. Its function is as follows. Confers resistance to fosfomycin and deoxycholate. This is Multidrug resistance protein MdtG from Escherichia coli O139:H28 (strain E24377A / ETEC).